The following is a 231-amino-acid chain: Aldehyde decarbonylase (231 aa).

Residues E32, E60, H63, E115, and H147 each coordinate Fe cation.

This sequence belongs to the aldehyde decarbonylase family. Binds 2 metal cations per subunit. The catalytic dinuclear metal-binding site could be either a di-iron or a manganese-iron cofactor. is required as a cofactor.

It carries out the reaction a long-chain fatty aldehyde + 2 NADPH + O2 + H(+) = a long-chain alkane + formate + 2 NADP(+) + H2O. Functionally, catalyzes the decarbonylation of fatty aldehydes to alkanes. Requires the presence of ferredoxin, ferredoxin reductase and NADPH for in vitro decarbonylase activity. Involved in the biosynthesis of alkanes, mainly heptadecane and pentadecane. The chain is Aldehyde decarbonylase from Synechocystis sp. (strain ATCC 27184 / PCC 6803 / Kazusa).